The following is a 390-amino-acid chain: Flagellar P-ring protein (390 aa).

Residues 1 to 36 form the signal peptide; the sequence is MFFSRKIRSLLLTPKRRWSLILTLCLIFTGINFSTS.

Belongs to the FlgI family. As to quaternary structure, the basal body constitutes a major portion of the flagellar organelle and consists of four rings (L,P,S, and M) mounted on a central rod.

The protein resides in the periplasm. It localises to the bacterial flagellum basal body. Functionally, assembles around the rod to form the L-ring and probably protects the motor/basal body from shearing forces during rotation. The sequence is that of Flagellar P-ring protein from Desulfotalea psychrophila (strain LSv54 / DSM 12343).